We begin with the raw amino-acid sequence, 225 residues long: MMYPIPGVLSPQDVARFREQLEQAEWVDGRVTTGAQGAQVKNNQQVDTRSTLYAALQNEVLNAVNQHALFFAAALPRTLSTPLFNRYQNNETYGFHVDGAVRSHPQNGWMRTDLSATLFLSDPQSYDGGELVVNDTFGQHRVKLPAGDLVLYPSSSLHCVTPVTRGVRVASFMWIQSMIRDDKKRAMLFELDNNIQSLKSRYGENEEILSLLNLYHNLLREWSEI.

The region spanning 78 to 177 is the Fe2OG dioxygenase domain; the sequence is TLSTPLFNRY…RVASFMWIQS (100 aa). Fe cation is bound by residues H96, D98, and H158. R168 provides a ligand contact to 2-oxoglutarate.

It depends on Fe(2+) as a cofactor. Requires L-ascorbate as cofactor.

In Escherichia coli O8 (strain IAI1), this protein is PKHD-type hydroxylase YbiX.